Consider the following 649-residue polypeptide: Acetylcholinesterase (649 aa).

The first 38 residues, 1–38, serve as a signal peptide directing secretion; it reads MAISCRQSRVLPMSLPLPLTIPLPLVLVLSLHLSGVCG. Cys-104 and Cys-131 are disulfide-bonded. Asn-126 and Asn-174 each carry an N-linked (GlcNAc...) asparagine glycan. Ser-276 acts as the Acyl-ester intermediate in catalysis. An intrachain disulfide couples Cys-330 to Cys-345. Asn-331 carries N-linked (GlcNAc...) asparagine glycosylation. Catalysis depends on charge relay system residues Glu-405 and His-518. Residues Cys-480 and Cys-598 are joined by a disulfide bond. Asn-531 is a glycosylation site (N-linked (GlcNAc...) asparagine). Residue Ser-619 is the site of GPI-anchor amidated serine attachment. A propeptide spans 620–649 (removed in mature form); that stretch reads GSASISPRLQLLGIAALIYICAALRTKRVF.

Belongs to the type-B carboxylesterase/lipase family. In terms of assembly, homodimer; disulfide-linked. The active unit is formed by non-covalent association of the 55 kDa and 16 kDa subunits. Post-translationally, proteolytic cleavage into the 16 kDa subunit and the 55 kDa subunits originates from the hydrophilic peptide, aa 148-180, and is associated with excretion out of the cell. Neither N-glycosylation nor dimerization is required for enzyme activity or substrate specificity, but protects the protein against proteolytic digestion.

The protein localises to the synapse. The protein resides in the cell membrane. The enzyme catalyses acetylcholine + H2O = choline + acetate + H(+). Rapidly hydrolyzes choline released into the synapse. It can hydrolyze butyrylthiocholine. The polypeptide is Acetylcholinesterase (Ace) (Drosophila melanogaster (Fruit fly)).